A 478-amino-acid chain; its full sequence is NADH-ubiquinone oxidoreductase 49 kDa subunit, mitochondrial (478 aa).

Residues methionine 1–tyrosine 42 constitute a mitochondrion transit peptide. The [4Fe-4S] cluster site is built by cysteine 341, cysteine 347, and cysteine 362.

This sequence belongs to the complex I 49 kDa subunit family. As to quaternary structure, complex I is composed of about 40 different subunits. [4Fe-4S] cluster is required as a cofactor.

The protein resides in the mitochondrion inner membrane. It carries out the reaction a ubiquinone + NADH + 5 H(+)(in) = a ubiquinol + NAD(+) + 4 H(+)(out). Functionally, core subunit of the mitochondrial membrane respiratory chain NADH dehydrogenase (Complex I) that is believed to belong to the minimal assembly required for catalysis. Complex I functions in the transfer of electrons from NADH to the respiratory chain. The immediate electron acceptor for the enzyme is believed to be ubiquinone. The protein is NADH-ubiquinone oxidoreductase 49 kDa subunit, mitochondrial (nuo-49) of Neurospora crassa (strain ATCC 24698 / 74-OR23-1A / CBS 708.71 / DSM 1257 / FGSC 987).